The following is a 294-amino-acid chain: HTH-type transcriptional regulator TcbR (294 aa).

One can recognise an HTH lysR-type domain in the interval 1–58 (MEFRQLKYFIAVAEAGNMAAAAKRLHVSQPPITRQMQALEADLGVVLLERSHRGIELT). A DNA-binding region (H-T-H motif) is located at residues 18-37 (MAAAAKRLHVSQPPITRQMQ).

Belongs to the LysR transcriptional regulatory family.

Functionally, involved in regulation of chlorinated catechol metabolism. Transcriptional activator of the tcbCDEF chlorocatechol oxidative operon. May bind 2-chloromuconate as an inducer. The protein is HTH-type transcriptional regulator TcbR (tcbR) of Pseudomonas sp. (strain P51).